Here is a 492-residue protein sequence, read N- to C-terminus: Steroid 21-hydroxylase (492 aa).

2 residues coordinate heme b: Arg-91 and Lys-120. Position 231 (Arg-231) interacts with 17alpha-hydroxyprogesterone. Arg-231 is a binding site for progesterone. Heme b-binding residues include His-363, Arg-424, and Cys-426.

The protein belongs to the cytochrome P450 family. Requires heme b as cofactor.

It is found in the endoplasmic reticulum membrane. The protein resides in the microsome membrane. The catalysed reaction is 17alpha-hydroxyprogesterone + reduced [NADPH--hemoprotein reductase] + O2 = 11-deoxycortisol + oxidized [NADPH--hemoprotein reductase] + H2O + H(+). It carries out the reaction progesterone + reduced [NADPH--hemoprotein reductase] + O2 = 21-hydroxyprogesterone + oxidized [NADPH--hemoprotein reductase] + H2O + H(+). In terms of biological role, specifically catalyzes the 21-hydroxylation of steroids. Required for the adrenal synthesis of mineralocorticoids and glucocorticoids. The polypeptide is Steroid 21-hydroxylase (CYP21) (Lynx lynx (Eurasian lynx)).